Reading from the N-terminus, the 349-residue chain is Flagellar P-ring protein (349 aa).

Residues 1–16 (MKYFFIIALLLSSLYS) form the signal peptide.

This sequence belongs to the FlgI family. The basal body constitutes a major portion of the flagellar organelle and consists of four rings (L,P,S, and M) mounted on a central rod.

It is found in the periplasm. The protein resides in the bacterial flagellum basal body. Functionally, assembles around the rod to form the L-ring and probably protects the motor/basal body from shearing forces during rotation. This Aliarcobacter butzleri (strain RM4018) (Arcobacter butzleri) protein is Flagellar P-ring protein.